The primary structure comprises 1666 residues: Atrochrysone carboxylic acid synthase PKS4 (1666 aa).

Residues 15 to 452 (FEPIAIVGIG…GNAGFMVIEE (438 aa)) form the Ketosynthase family 3 (KS3) domain. Catalysis depends on for beta-ketoacyl synthase activity residues C194, H332, and H372. Residues 555–863 (AFCFSGQGGE…WMTALDALMR (309 aa)) are malonyl-CoA:ACP transacylase (MAT) domain. S632 functions as the For acyl/malonyl transferase activity in the catalytic mechanism. Residues 905-1034 (REVKASSTML…EQDLLESLSL (130 aa)) form an N-terminal hotdog fold region. The 302-residue stretch at 905–1206 (REVKASSTML…MAKMKIYVLK (302 aa)) folds into the PKS/mFAS DH domain. The tract at residues 935-1203 (LLNHVMAGYT…DVRMAKMKIY (269 aa)) is product template (PT) domain. The tract at residues 1050-1206 (STDVLRKELA…MAKMKIYVLK (157 aa)) is C-terminal hotdog fold. S1269 is modified (O-(pantetheine 4'-phosphoryl)serine). In terms of domain architecture, Carrier spans 1331 to 1395 (ATSPSLPIMP…TSTEPSQTLV (65 aa)). The proline-rich linker region stretch occupies residues 1334–1397 (PSLPIMPNGV…TEPSQTLVAN (64 aa)). An alpha/beta hydrolase superfamily-type thioesterase (TE) domain region spans residues 1444 to 1529 (TVIGIHCPGL…PPGVVGLTAQ (86 aa)).

It carries out the reaction holo-[ACP] + 8 malonyl-CoA + 8 H(+) = atrochrysone carboxyl-[ACP] + 8 CO2 + 8 CoA + 2 H2O. The protein operates within secondary metabolite biosynthesis. Its function is as follows. Non-reducing polyketide synthase that synthesizes the universal anthraquinone precursor atrochrysone carboxylic acid from malonyl-CoA. Produces a mixture of both 3R and 3S enantiomers with an excess of the 3S form. PKS4 catalyzes both hepta- and octaketide synthesis and also yields 6-hydroxymusizin, probably via carboxylating activity inherent to the KS domain. The polypeptide is Atrochrysone carboxylic acid synthase PKS4 (Calonarius odorifer (Mushroom)).